The primary structure comprises 469 residues: Uronate isomerase (469 aa).

This sequence belongs to the metallo-dependent hydrolases superfamily. Uronate isomerase family.

The enzyme catalyses D-glucuronate = D-fructuronate. It carries out the reaction aldehydo-D-galacturonate = keto-D-tagaturonate. It functions in the pathway carbohydrate metabolism; pentose and glucuronate interconversion. The chain is Uronate isomerase from Pectobacterium carotovorum subsp. carotovorum (strain PC1).